The chain runs to 23 residues: Acidic phospholipase A2 CTs-A1 (23 aa).

It depends on Ca(2+) as a cofactor. In terms of processing, contains 7 disulfide bonds. In terms of tissue distribution, expressed by the venom gland.

It localises to the secreted. It catalyses the reaction a 1,2-diacyl-sn-glycero-3-phosphocholine + H2O = a 1-acyl-sn-glycero-3-phosphocholine + a fatty acid + H(+). In terms of biological role, snake venom phospholipase A2 (PLA2) that shows a moderate inhibition of ADP-induced human platelet aggregation when tested on platelet rich plasma. Exhibits moderate hydrolytic activities and prefers the anionic micelles (dPPC with deoxycholate) to the zwitterionic micelles (dPPC with Triton X-100). PLA2 catalyzes the calcium-dependent hydrolysis of the 2-acyl groups in 3-sn-phosphoglycerides. The chain is Acidic phospholipase A2 CTs-A1 from Trimeresurus stejnegeri (Chinese green tree viper).